Consider the following 248-residue polypeptide: Protein GrpE (248 aa).

The interval 229 to 248 (AAPKEDTLPAQENQSSPADS) is disordered. Over residues 238–248 (AQENQSSPADS) the composition is skewed to polar residues.

This sequence belongs to the GrpE family. Homodimer.

Its subcellular location is the cytoplasm. Functionally, participates actively in the response to hyperosmotic and heat shock by preventing the aggregation of stress-denatured proteins, in association with DnaK and GrpE. It is the nucleotide exchange factor for DnaK and may function as a thermosensor. Unfolded proteins bind initially to DnaJ; upon interaction with the DnaJ-bound protein, DnaK hydrolyzes its bound ATP, resulting in the formation of a stable complex. GrpE releases ADP from DnaK; ATP binding to DnaK triggers the release of the substrate protein, thus completing the reaction cycle. Several rounds of ATP-dependent interactions between DnaJ, DnaK and GrpE are required for fully efficient folding. This Trichormus variabilis (strain ATCC 29413 / PCC 7937) (Anabaena variabilis) protein is Protein GrpE.